The sequence spans 289 residues: Bidirectional sugar transporter SWEET10 (289 aa).

Topologically, residues 1–5 (MAISQ) are extracellular. Residues 6-26 (AVLATVFGILGNIISFFVCLA) traverse the membrane as a helical segment. The MtN3/slv 1 domain occupies 11-96 (VFGILGNIIS…SLFFFYAPKK (86 aa)). Residues 27-43 (PIPTFVRIYKRKSSEGY) are Cytoplasmic-facing. Residues 44–64 (QSIPYVISLFSAMLWMYYAMI) form a helical membrane-spanning segment. Residues 65-70 (KKDAMM) are Extracellular-facing. A helical transmembrane segment spans residues 71 to 91 (LITINSFAFVVQIVYISLFFF). Residues 92-103 (YAPKKEKTLTVK) are Cytoplasmic-facing. Residues 104–124 (FVLFVDVLGFGAIFVLTYFII) traverse the membrane as a helical segment. Topologically, residues 125–131 (HANKRVQ) are extracellular. Positions 131–214 (QVLGYICMVF…QMILFLIYKK (84 aa)) constitute a MtN3/slv 2 domain. The chain crosses the membrane as a helical span at residues 132–152 (VLGYICMVFALSVFVAPLGII). The Cytoplasmic portion of the chain corresponds to 153–165 (RKVIKTKSAEFMP). The chain crosses the membrane as a helical span at residues 166–186 (FGLSFFLTLSAVMWFFYGLLL). The Extracellular portion of the chain corresponds to 187-190 (KDMN). Residues 191 to 211 (IALPNVLGFIFGVLQMILFLI) form a helical membrane-spanning segment. Residues 212-289 (YKKPGTKVLE…EKEVFLISKN (78 aa)) are Cytoplasmic-facing.

The protein belongs to the SWEET sugar transporter family. In terms of assembly, forms heterooligomers with SWEET8.

It is found in the cell membrane. Mediates both low-affinity uptake and efflux of sugar across the plasma membrane. The chain is Bidirectional sugar transporter SWEET10 from Arabidopsis thaliana (Mouse-ear cress).